The sequence spans 193 residues: Pyridoxal 5'-phosphate synthase subunit PdxT (193 aa).

48–50 (GES) lines the L-glutamine pocket. The Nucleophile role is filled by Cys80. L-glutamine-binding positions include Arg112 and 140 to 141 (IR). Catalysis depends on charge relay system residues His176 and Glu178.

It belongs to the glutaminase PdxT/SNO family. In the presence of PdxS, forms a dodecamer of heterodimers. Only shows activity in the heterodimer.

The catalysed reaction is aldehydo-D-ribose 5-phosphate + D-glyceraldehyde 3-phosphate + L-glutamine = pyridoxal 5'-phosphate + L-glutamate + phosphate + 3 H2O + H(+). It carries out the reaction L-glutamine + H2O = L-glutamate + NH4(+). It participates in cofactor biosynthesis; pyridoxal 5'-phosphate biosynthesis. Catalyzes the hydrolysis of glutamine to glutamate and ammonia as part of the biosynthesis of pyridoxal 5'-phosphate. The resulting ammonia molecule is channeled to the active site of PdxS. In Mycolicibacterium smegmatis (strain ATCC 700084 / mc(2)155) (Mycobacterium smegmatis), this protein is Pyridoxal 5'-phosphate synthase subunit PdxT.